A 367-amino-acid chain; its full sequence is tRNA(Ile)-lysidine synthase, chloroplastic (367 aa).

An ATP-binding site is contributed by 64–69 (SGGQDS).

The protein belongs to the tRNA(Ile)-lysidine synthase family.

The protein resides in the plastid. It localises to the chloroplast. It catalyses the reaction cytidine(34) in tRNA(Ile2) + L-lysine + ATP = lysidine(34) in tRNA(Ile2) + AMP + diphosphate + H(+). Ligates lysine onto the cytidine present at position 34 of the AUA codon-specific tRNA(Ile) that contains the anticodon CAU, in an ATP-dependent manner. Cytidine is converted to lysidine, thus changing the amino acid specificity of the tRNA from methionine to isoleucine. The protein is tRNA(Ile)-lysidine synthase, chloroplastic of Nephroselmis olivacea (Green alga).